A 147-amino-acid polypeptide reads, in one-letter code: Arginine vasopressin-induced protein 1 (147 aa).

2 disordered regions span residues Met-1–Lys-24 and Leu-104–His-147. Residues Ala-105–Tyr-119 show a composition bias toward polar residues. A compositionally biased stretch (basic residues) spans His-121–Arg-134. Residues Gly-137–His-147 show a composition bias toward polar residues.

In terms of biological role, may be involved in MAP kinase activation, epithelial sodium channel (ENaC) down-regulation and cell cycling. The protein is Arginine vasopressin-induced protein 1 (AVPI1) of Homo sapiens (Human).